A 213-amino-acid polypeptide reads, in one-letter code: MMQTVAVIDYGMGNLHSVAKALEHVGAGRVLVSSDAAVIREADRVVFPGVGAIRDCMAEIRRLGFDALVREVSQDRPFLGICVGMQALLERSEENDGVDCIGLFPGQVRFFGKDLHEAGEHLKVPHMGWNQVSQAVEHPLWHEIPDQARFYFVHSYYIEAGNPRQVVGHGHYGVDFAAALAEGSRFAVQFHPEKSHTHGLQLLQNFVAWDGRW.

Positions 4–213 constitute a Glutamine amidotransferase type-1 domain; sequence TVAVIDYGMG…QNFVAWDGRW (210 aa). The Nucleophile role is filled by C82. Active-site residues include H191 and E193.

As to quaternary structure, heterodimer of HisH and HisF.

The protein resides in the cytoplasm. The catalysed reaction is 5-[(5-phospho-1-deoxy-D-ribulos-1-ylimino)methylamino]-1-(5-phospho-beta-D-ribosyl)imidazole-4-carboxamide + L-glutamine = D-erythro-1-(imidazol-4-yl)glycerol 3-phosphate + 5-amino-1-(5-phospho-beta-D-ribosyl)imidazole-4-carboxamide + L-glutamate + H(+). It carries out the reaction L-glutamine + H2O = L-glutamate + NH4(+). It participates in amino-acid biosynthesis; L-histidine biosynthesis; L-histidine from 5-phospho-alpha-D-ribose 1-diphosphate: step 5/9. Functionally, IGPS catalyzes the conversion of PRFAR and glutamine to IGP, AICAR and glutamate. The HisH subunit provides the glutamine amidotransferase activity that produces the ammonia necessary to HisF for the synthesis of IGP and AICAR. This is Imidazole glycerol phosphate synthase subunit HisH 1 (hisH1) from Pseudomonas aeruginosa (strain ATCC 15692 / DSM 22644 / CIP 104116 / JCM 14847 / LMG 12228 / 1C / PRS 101 / PAO1).